We begin with the raw amino-acid sequence, 260 residues long: Creatinine amidohydrolase (260 aa).

Mn(2+) is bound at residue glutamate 34. Zn(2+) is bound by residues glutamate 34, histidine 36, and aspartate 45. Residue aspartate 45 coordinates Mn(2+). Serine 78 provides a ligand contact to creatine. Residue histidine 120 participates in Mn(2+) binding. Histidine 120 is a Zn(2+) binding site. 4 residues coordinate creatine: tyrosine 121, tryptophan 174, aspartate 175, and histidine 178. Residue glutamate 183 coordinates Zn(2+).

It belongs to the creatininase superfamily. As to quaternary structure, homohexamer; trimer of dimers. Zn(2+) serves as cofactor. Mn(2+) is required as a cofactor.

It carries out the reaction creatinine + H2O = creatine. Its pathway is amine and polyamine degradation; creatinine degradation. Is markedly inactivated in vitro by heavy metal ions, N-bromosuccinimide, ethoxyformic anhydride, and dye-sensitized photooxidation. In terms of biological role, cyclic amidohydrolase that catalyzes the reversible conversion of creatinine to creatine. Is also active toward glycocyamidine, though the reaction rate is very low, but it is completely inert toward hydantoin and its derivatives. This is Creatinine amidohydrolase (crnA) from Pseudomonas putida (Arthrobacter siderocapsulatus).